A 336-amino-acid polypeptide reads, in one-letter code: Phosphate acyltransferase (336 aa).

Belongs to the PlsX family. Homodimer. Probably interacts with PlsY.

The protein resides in the cytoplasm. It carries out the reaction a fatty acyl-[ACP] + phosphate = an acyl phosphate + holo-[ACP]. Its pathway is lipid metabolism; phospholipid metabolism. In terms of biological role, catalyzes the reversible formation of acyl-phosphate (acyl-PO(4)) from acyl-[acyl-carrier-protein] (acyl-ACP). This enzyme utilizes acyl-ACP as fatty acyl donor, but not acyl-CoA. In Ectopseudomonas mendocina (strain ymp) (Pseudomonas mendocina), this protein is Phosphate acyltransferase.